The sequence spans 517 residues: Pentatricopeptide repeat-containing protein At5g42450, mitochondrial (517 aa).

The transit peptide at 1 to 23 (MLHMILSQRVILLRKYHSSANAL) directs the protein to the mitochondrion. 9 PPR repeats span residues 57–91 (DVIS…GIRP), 92–126 (NEFT…GLAS), 127–157 (NVFV…TRDP), 158–188 (NVVS…MPER), 189–223 (SVVT…GVVI), 225–259 (NEST…LGKR), 261–291 (NVFV…LEEE), 294–329 (NIVS…NLRP), and 368–398 (ELEH…MPLD). The segment at 403–478 (FWKALLGGCQ…FTGCSWIEVR (76 aa)) is type E motif. Positions 479–509 (DQIRVFVNADKNNELKDEVYRMLALVSQHLE) are type E(+) motif.

It belongs to the PPR family. PCMP-E subfamily.

The protein localises to the mitochondrion. This chain is Pentatricopeptide repeat-containing protein At5g42450, mitochondrial (PCMP-E102), found in Arabidopsis thaliana (Mouse-ear cress).